The sequence spans 239 residues: UDP-2,3-diacylglucosamine hydrolase (239 aa).

Mn(2+)-binding residues include Asp8, His10, Asp41, Asn78, and His113. Residue 78–79 (NR) participates in substrate binding. Asp121, Ser159, Asn163, Lys166, and His194 together coordinate substrate. Residues His194 and His196 each coordinate Mn(2+).

The protein belongs to the LpxH family. Mn(2+) serves as cofactor.

The protein resides in the cell inner membrane. It catalyses the reaction UDP-2-N,3-O-bis[(3R)-3-hydroxytetradecanoyl]-alpha-D-glucosamine + H2O = 2-N,3-O-bis[(3R)-3-hydroxytetradecanoyl]-alpha-D-glucosaminyl 1-phosphate + UMP + 2 H(+). Its pathway is glycolipid biosynthesis; lipid IV(A) biosynthesis; lipid IV(A) from (3R)-3-hydroxytetradecanoyl-[acyl-carrier-protein] and UDP-N-acetyl-alpha-D-glucosamine: step 4/6. Its function is as follows. Hydrolyzes the pyrophosphate bond of UDP-2,3-diacylglucosamine to yield 2,3-diacylglucosamine 1-phosphate (lipid X) and UMP by catalyzing the attack of water at the alpha-P atom. Involved in the biosynthesis of lipid A, a phosphorylated glycolipid that anchors the lipopolysaccharide to the outer membrane of the cell. The sequence is that of UDP-2,3-diacylglucosamine hydrolase from Shewanella sp. (strain MR-7).